Here is a 78-residue protein sequence, read N- to C-terminus: Gas vesicle protein A (78 aa).

It belongs to the gas vesicle GvpA family. In terms of assembly, the gas vesicle shell is 2 nm thick and consists of a single layer of this protein. It forms helical ribs nearly perpendicular to the long axis of the vesicle.

The protein localises to the gas vesicle shell. Gas vesicles are hollow, gas filled proteinaceous nanostructures found in some microorganisms. During planktonic growth they allow positioning of the organism at a favorable depth for light or nutrient acquisition. GvpA forms the protein shell. In Halorubrum vacuolatum (Natronobacterium vacuolatum), this protein is Gas vesicle protein A.